Consider the following 374-residue polypeptide: Putative glutamate--cysteine ligase 2 (374 aa).

It belongs to the glutamate--cysteine ligase type 2 family. YbdK subfamily.

The catalysed reaction is L-cysteine + L-glutamate + ATP = gamma-L-glutamyl-L-cysteine + ADP + phosphate + H(+). Its function is as follows. ATP-dependent carboxylate-amine ligase which exhibits weak glutamate--cysteine ligase activity. The protein is Putative glutamate--cysteine ligase 2 of Acidovorax sp. (strain JS42).